A 228-amino-acid polypeptide reads, in one-letter code: UPF0328 protein ECU07_0040 (228 aa).

Belongs to the UPF0328 family.

The chain is UPF0328 protein ECU07_0040 from Encephalitozoon cuniculi (strain GB-M1) (Microsporidian parasite).